The following is a 210-amino-acid chain: ATP-dependent Clp protease proteolytic subunit (210 aa).

The active-site Nucleophile is S107. Residue H132 is part of the active site.

The protein belongs to the peptidase S14 family. Fourteen ClpP subunits assemble into 2 heptameric rings which stack back to back to give a disk-like structure with a central cavity, resembling the structure of eukaryotic proteasomes.

It localises to the cytoplasm. It carries out the reaction Hydrolysis of proteins to small peptides in the presence of ATP and magnesium. alpha-casein is the usual test substrate. In the absence of ATP, only oligopeptides shorter than five residues are hydrolyzed (such as succinyl-Leu-Tyr-|-NHMec, and Leu-Tyr-Leu-|-Tyr-Trp, in which cleavage of the -Tyr-|-Leu- and -Tyr-|-Trp bonds also occurs).. Functionally, cleaves peptides in various proteins in a process that requires ATP hydrolysis. Has a chymotrypsin-like activity. Plays a major role in the degradation of misfolded proteins. This is ATP-dependent Clp protease proteolytic subunit from Chromobacterium violaceum (strain ATCC 12472 / DSM 30191 / JCM 1249 / CCUG 213 / NBRC 12614 / NCIMB 9131 / NCTC 9757 / MK).